A 108-amino-acid chain; its full sequence is Small ribosomal subunit protein mS33 (108 aa).

Positions 84–108 are disordered; the sequence is LRARDKGAPKKKRTAPSAADAKKKK.

This sequence belongs to the mitochondrion-specific ribosomal protein mS33 family. In terms of assembly, component of the mitochondrial small ribosomal subunit (mt-SSU). Mature N.crassa 74S mitochondrial ribosomes consist of a small (37S) and a large (54S) subunit. The 37S small subunit contains a 16S ribosomal RNA (16S mt-rRNA) and 32 different proteins. The 54S large subunit contains a 23S rRNA (23S mt-rRNA) and 42 different proteins.

It localises to the mitochondrion. Its function is as follows. Component of the mitochondrial ribosome (mitoribosome), a dedicated translation machinery responsible for the synthesis of mitochondrial genome-encoded proteins, including at least some of the essential transmembrane subunits of the mitochondrial respiratory chain. The mitoribosomes are attached to the mitochondrial inner membrane and translation products are cotranslationally integrated into the membrane. The protein is Small ribosomal subunit protein mS33 (rsm27) of Neurospora crassa (strain ATCC 24698 / 74-OR23-1A / CBS 708.71 / DSM 1257 / FGSC 987).